Consider the following 84-residue polypeptide: UPF0729 protein F18A11.3 (84 aa).

A helical membrane pass occupies residues 1–21; sequence MVCLPCIFLPIMMAIYMKFIM.

This sequence belongs to the UPF0729 family.

It localises to the cell membrane. The protein is UPF0729 protein F18A11.3 of Caenorhabditis elegans.